The primary structure comprises 399 residues: Enoyl-[acyl-carrier-protein] reductase [NADH] (399 aa).

NAD(+) contacts are provided by residues 48-53 (GASTGY), 74-75 (FE), 111-112 (DA), and 139-140 (LA). Tyr-225 serves as a coordination point for substrate. Tyr-235 (proton donor) is an active-site residue. NAD(+) contacts are provided by residues Lys-244 and 273–275 (VVT).

It belongs to the TER reductase family. As to quaternary structure, monomer.

The catalysed reaction is a 2,3-saturated acyl-[ACP] + NAD(+) = a (2E)-enoyl-[ACP] + NADH + H(+). It participates in lipid metabolism; fatty acid biosynthesis. In terms of biological role, involved in the final reduction of the elongation cycle of fatty acid synthesis (FAS II). Catalyzes the reduction of a carbon-carbon double bond in an enoyl moiety that is covalently linked to an acyl carrier protein (ACP). The sequence is that of Enoyl-[acyl-carrier-protein] reductase [NADH] from Serratia proteamaculans (strain 568).